Here is a 192-residue protein sequence, read N- to C-terminus: Glycerol-3-phosphate acyltransferase (192 aa).

The next 5 helical transmembrane spans lie at 3–23 (ALFL…EVIA), 51–71 (YGVL…LIAV), 80–100 (VLTF…FFGF), 112–132 (VVFA…LGIF), and 149–169 (AFLF…AIVI).

This sequence belongs to the PlsY family. As to quaternary structure, probably interacts with PlsX.

The protein localises to the cell inner membrane. The catalysed reaction is an acyl phosphate + sn-glycerol 3-phosphate = a 1-acyl-sn-glycero-3-phosphate + phosphate. Its pathway is lipid metabolism; phospholipid metabolism. Its function is as follows. Catalyzes the transfer of an acyl group from acyl-phosphate (acyl-PO(4)) to glycerol-3-phosphate (G3P) to form lysophosphatidic acid (LPA). This enzyme utilizes acyl-phosphate as fatty acyl donor, but not acyl-CoA or acyl-ACP. The protein is Glycerol-3-phosphate acyltransferase of Aquifex aeolicus (strain VF5).